Here is a 386-residue protein sequence, read N- to C-terminus: Peroxisomal membrane protein PEX13 (386 aa).

The disordered stretch occupies residues 1–76 (MSSTAVPRPK…SSGTYGESNT (76 aa)). Residues 1-263 (MSSTAVPRPK…KATRRKISWK (263 aa)) are Lumenal-facing. A compositionally biased stretch (polar residues) spans 23 to 39 (RNAQSLSAMMTSNQQDS). Residues 44–55 (ESNNSNSASESA) are compositionally biased toward low complexity. The segment covering 65 to 76 (LNSSGTYGESNT) has biased composition (polar residues). Residues 264–280 (PLLFFLMAVFGFPYLLN) form a helical membrane-spanning segment. Topologically, residues 281 to 386 (KFITKLQTSG…EHVDDETRTH (106 aa)) are cytoplasmic. The SH3 domain occupies 306 to 372 (SKLEFARALY…PYNYIEIIKR (67 aa)).

This sequence belongs to the peroxin-13 family. Interacts (via SH3 domain) with PEX14 (via SH3-binding motif); forming the PEX13-PEX14 docking complex.

It is found in the peroxisome membrane. Functionally, component of the PEX13-PEX14 docking complex, a translocon channel that specifically mediates the import of peroxisomal cargo proteins bound to PEX5 or PEX21 receptors. The PEX13-PEX14 docking complex forms a large import pore which can be opened to a diameter of about 9 nm. Mechanistically, PEX5 (or PEX21) receptor along with cargo proteins associates with the PEX14 subunit of the PEX13-PEX14 docking complex in the cytosol, leading to the insertion of the receptor into the organelle membrane with the concomitant translocation of the cargo into the peroxisome matrix. The protein is Peroxisomal membrane protein PEX13 of Saccharomyces cerevisiae (strain ATCC 204508 / S288c) (Baker's yeast).